Here is a 112-residue protein sequence, read N- to C-terminus: Glutaredoxin-C6 (112 aa).

The Glutaredoxin domain maps to 3 to 103; the sequence is LAKAKETVAS…PLLTEAGAIA (101 aa). Cys23 and Cys26 are oxidised to a cystine.

This sequence belongs to the glutaredoxin family. CPYC subfamily. The N-terminus is blocked. As to expression, expressed in aleurone layer.

It localises to the cytoplasm. Has a glutathione-disulfide oxidoreductase activity in the presence of NADPH and glutathione reductase. Reduces low molecular weight disulfides and proteins. Possesses thioltransferase, dehydroascorbate reductase and GSH-dependent peroxidase activities in vitro. This is Glutaredoxin-C6 (GRXC6) from Oryza sativa subsp. japonica (Rice).